The sequence spans 154 residues: Myoglobin (154 aa).

The region spanning 2 to 148 (GLSDGEWQLV…FRKDIAAKYK (147 aa)) is the Globin domain. Ser4 bears the Phosphoserine mark. His65 serves as a coordination point for nitrite. Position 65 (His65) interacts with O2. Thr68 bears the Phosphothreonine mark. His94 contacts heme b.

This sequence belongs to the globin family. In terms of assembly, monomeric.

The protein localises to the cytoplasm. The protein resides in the sarcoplasm. The enzyme catalyses Fe(III)-heme b-[protein] + nitric oxide + H2O = Fe(II)-heme b-[protein] + nitrite + 2 H(+). The catalysed reaction is H2O2 + AH2 = A + 2 H2O. Monomeric heme protein which primary function is to store oxygen and facilitate its diffusion within muscle tissues. Reversibly binds oxygen through a pentacoordinated heme iron and enables its timely and efficient release as needed during periods of heightened demand. Depending on the oxidative conditions of tissues and cells, and in addition to its ability to bind oxygen, it also has a nitrite reductase activity whereby it regulates the production of bioactive nitric oxide. Under stress conditions, like hypoxia and anoxia, it also protects cells against reactive oxygen species thanks to its pseudoperoxidase activity. The protein is Myoglobin (MB) of Peponocephala electra (Melon-headed whale).